An 83-amino-acid chain; its full sequence is Large ribosomal subunit protein eL43 (83 aa).

Residues C38, C41, C56, and C59 each coordinate Zn(2+). A C4-type zinc finger spans residues 38 to 59 (CPVCGRRAVRRISTGIWQCKKC).

It belongs to the eukaryotic ribosomal protein eL43 family. Putative zinc-binding subfamily. In terms of assembly, part of the 50S ribosomal subunit. It depends on Zn(2+) as a cofactor.

In terms of biological role, binds to the 23S rRNA. This Pyrococcus abyssi (strain GE5 / Orsay) protein is Large ribosomal subunit protein eL43.